We begin with the raw amino-acid sequence, 122 residues long: Large ribosomal subunit protein uL14 (122 aa).

Belongs to the universal ribosomal protein uL14 family. As to quaternary structure, part of the 50S ribosomal subunit. Forms a cluster with proteins L3 and L19. In the 70S ribosome, L14 and L19 interact and together make contacts with the 16S rRNA in bridges B5 and B8.

Functionally, binds to 23S rRNA. Forms part of two intersubunit bridges in the 70S ribosome. This is Large ribosomal subunit protein uL14 from Halalkalibacterium halodurans (strain ATCC BAA-125 / DSM 18197 / FERM 7344 / JCM 9153 / C-125) (Bacillus halodurans).